An 85-amino-acid polypeptide reads, in one-letter code: Putative membrane protein insertion efficiency factor (85 aa).

The interval 62 to 85 is disordered; it reads KGGFDPVPLKKDKSASKHSHKHNH.

The protein belongs to the UPF0161 family.

Its subcellular location is the cell membrane. In terms of biological role, could be involved in insertion of integral membrane proteins into the membrane. In Staphylococcus aureus (strain Mu3 / ATCC 700698), this protein is Putative membrane protein insertion efficiency factor.